A 577-amino-acid polypeptide reads, in one-letter code: Arginine--tRNA ligase (577 aa).

The 'HIGH' region signature appears at 122 to 132 (PNVAKEMHVGH).

Belongs to the class-I aminoacyl-tRNA synthetase family. As to quaternary structure, monomer.

Its subcellular location is the cytoplasm. The enzyme catalyses tRNA(Arg) + L-arginine + ATP = L-arginyl-tRNA(Arg) + AMP + diphosphate. The protein is Arginine--tRNA ligase of Salmonella newport (strain SL254).